A 94-amino-acid polypeptide reads, in one-letter code: Protein RESPONSE TO LOW SULFUR 1 (94 aa).

A coiled-coil region spans residues Val8–Glu35.

The protein is Protein RESPONSE TO LOW SULFUR 1 of Arabidopsis thaliana (Mouse-ear cress).